Consider the following 167-residue polypeptide: Protein-export protein SecB (167 aa).

The disordered stretch occupies residues 1–20; that stretch reads MASNDDAPVGAANGNGNTGA.

Belongs to the SecB family. As to quaternary structure, homotetramer, a dimer of dimers. One homotetramer interacts with 1 SecA dimer.

It is found in the cytoplasm. Its function is as follows. One of the proteins required for the normal export of preproteins out of the cell cytoplasm. It is a molecular chaperone that binds to a subset of precursor proteins, maintaining them in a translocation-competent state. It also specifically binds to its receptor SecA. This Mesorhizobium japonicum (strain LMG 29417 / CECT 9101 / MAFF 303099) (Mesorhizobium loti (strain MAFF 303099)) protein is Protein-export protein SecB.